Consider the following 84-residue polypeptide: NAD(P)H-quinone oxidoreductase subunit O (84 aa).

It belongs to the complex I NdhO subunit family. NDH-1 can be composed of about 15 different subunits; different subcomplexes with different compositions have been identified which probably have different functions.

The protein resides in the cellular thylakoid membrane. It catalyses the reaction a plastoquinone + NADH + (n+1) H(+)(in) = a plastoquinol + NAD(+) + n H(+)(out). The catalysed reaction is a plastoquinone + NADPH + (n+1) H(+)(in) = a plastoquinol + NADP(+) + n H(+)(out). Its function is as follows. NDH-1 shuttles electrons from an unknown electron donor, via FMN and iron-sulfur (Fe-S) centers, to quinones in the respiratory and/or the photosynthetic chain. The immediate electron acceptor for the enzyme in this species is believed to be plastoquinone. Couples the redox reaction to proton translocation, and thus conserves the redox energy in a proton gradient. Cyanobacterial NDH-1 also plays a role in inorganic carbon-concentration. This is NAD(P)H-quinone oxidoreductase subunit O from Synechococcus sp. (strain CC9902).